A 183-amino-acid chain; its full sequence is Translocon-associated protein subunit beta (183 aa).

Residues 1–17 (MRLLSFVVLALFAVTQA) form the signal peptide. Topologically, residues 18–149 (EEGARLLASK…DRRFSPHFLD (132 aa)) are lumenal. Asn88 and Asn104 each carry an N-linked (GlcNAc...) asparagine glycan. Residues 150-169 (WAAFGVMTLPSIGIPLLLWY) traverse the membrane as a helical segment. Residues 170–183 (SSKRKYDTPKTKKN) are Cytoplasmic-facing.

Belongs to the TRAP-beta family. In terms of assembly, heterotetramer of TRAP-alpha, TRAP-beta, TRAP-delta and TRAP-gamma. Interacts with STING1.

Its subcellular location is the endoplasmic reticulum membrane. Its function is as follows. TRAP proteins are part of a complex whose function is to bind calcium to the ER membrane and thereby regulate the retention of ER resident proteins. This Homo sapiens (Human) protein is Translocon-associated protein subunit beta (SSR2).